A 164-amino-acid chain; its full sequence is Mineralocorticoid receptor (164 aa).

The region spanning 1–162 (QYSWMCLSSF…EFPRCWWRSS (162 aa)) is the NR LBD domain. 21-hydroxyprogesterone-binding residues include arginine 15 and threonine 143. The aldosterone site is built by arginine 15 and threonine 143. Arginine 15 and threonine 143 together coordinate progesterone.

It belongs to the nuclear hormone receptor family. NR3 subfamily. As to quaternary structure, heteromultimeric cytoplasmic complex with HSP90, HSP70, and FKBP4, in the absence of ligand. After ligand binding, it translocates to the nucleus and binds to DNA as a homodimer and as a heterodimer with NR3C1. Binds the coactivator NCOA2. May interact with HSD11B2 in the absence of ligand. Binds the coactivators NCOA1, TIF1 and NRIP1. Post-translationally, phosphorylated.

Its subcellular location is the cytoplasm. It is found in the nucleus. The protein localises to the endoplasmic reticulum membrane. Receptor for both mineralocorticoids (MC) such as aldosterone and glucocorticoids (GC) such as corticosterone or cortisol. Binds to mineralocorticoid response elements (MRE) and transactivates target genes. The effect of MC is to increase ion and water transport and thus raise extracellular fluid volume and blood pressure and lower potassium levels. The polypeptide is Mineralocorticoid receptor (NR3C2) (Sus scrofa (Pig)).